The sequence spans 214 residues: Putative ras-related protein Rab-5B (214 aa).

56–63 (GEMNTGKT) serves as a coordination point for GTP. The Effector region signature appears at 77–85 (TDSTIGAAF). GTP contacts are provided by residues 103 to 107 (DTAGQ) and 161 to 164 (NKVD).

This sequence belongs to the small GTPase superfamily. Rab family. Post-translationally, this sequence lacks the C-terminal cysteine motifs subject to isoprenylation in other Rab proteins.

The polypeptide is Putative ras-related protein Rab-5B (rab5B) (Dictyostelium discoideum (Social amoeba)).